The primary structure comprises 255 residues: MAWPGPLLLKDRKGRAYLVFPKEGGVFHHHKGSVPHEALLEAGPGGVVRTHLGEELSVHRPTLEEYLLHMKRSATPTYPKDASAMVTLLDLAPGMRVLEAGTGSGGLTLFLARAVGEKGLVESYEARPHHLAQAERNVRAFWQVENVRFHLGKLEEAELEEAAYDGVALDLMEPWKALEKAALALKPDRFLVAYLPNITQVLELVRAAEAHPFRLERVLEVGWREWEVRLPVAHPRFQQVGHTAFLVALRRWKAS.

Residues 104–107, glutamate 125, histidine 130, glutamate 155, and aspartate 170 each bind S-adenosyl-L-methionine; that span reads SGGL.

The protein belongs to the class I-like SAM-binding methyltransferase superfamily. TRM61 family. Homotetramer composed of a dimer of dimers.

It catalyses the reaction adenosine(58) in tRNA + S-adenosyl-L-methionine = N(1)-methyladenosine(58) in tRNA + S-adenosyl-L-homocysteine + H(+). Catalyzes the S-adenosyl-L-methionine-dependent formation of N(1)-methyladenine at position 58 (m1A58) in tRNA. This is tRNA (adenine(58)-N(1))-methyltransferase TrmI (trmI) from Thermus thermophilus (strain ATCC 27634 / DSM 579 / HB8).